The following is a 371-amino-acid chain: uncharacterized protein (371 aa).

Solcar repeat units follow at residues 3–98 (DDSL…CKVL), 131–276 (RYWG…FKSF), and 284–369 (KSNF…VRKW). Transmembrane regions (helical) follow at residues 9 to 29 (AIAG…LDVV), 73 to 93 (GVGP…VVYE), 137 to 157 (IFSA…IWVV), 253 to 273 (LFPS…YEYF), 290 to 310 (VLAA…HEVL), and 341 to 362 (YYSG…TFLS).

This sequence belongs to the mitochondrial carrier (TC 2.A.29) family.

The protein localises to the mitochondrion inner membrane. This is an uncharacterized protein from Schizosaccharomyces pombe (strain 972 / ATCC 24843) (Fission yeast).